Here is a 64-residue protein sequence, read N- to C-terminus: Conotoxin Ts-011 (64 aa).

A signal peptide spans 1 to 22 (MHCLPVLVILLLLIASTPSVDA). Residues 23 to 51 (RPKTKDDVPLASFHGADNANRILRTLWNL) constitute a propeptide that is removed on maturation. Isoleucine amide is present on Ile63.

This sequence belongs to the conotoxin T superfamily. Post-translationally, contains 2 disulfide bonds that can be either 'C1-C3, C2-C4' or 'C1-C4, C2-C3', since these disulfide connectivities have been observed for conotoxins with cysteine framework V (for examples, see AC P0DQQ7 and AC P81755). In terms of tissue distribution, expressed by the venom duct.

The protein localises to the secreted. The sequence is that of Conotoxin Ts-011 from Conus tessulatus (Tessellate cone).